Here is a 183-residue protein sequence, read N- to C-terminus: Protein Syd (183 aa).

The protein belongs to the Syd family.

Its subcellular location is the cell inner membrane. Its function is as follows. Interacts with the SecY protein in vivo. May bind preferentially to an uncomplexed state of SecY, thus functioning either as a chelating agent for excess SecY in the cell or as a regulatory factor that negatively controls the translocase function. The chain is Protein Syd from Aliivibrio fischeri (strain ATCC 700601 / ES114) (Vibrio fischeri).